The chain runs to 1128 residues: Apoptosis-stimulating of p53 protein 2 (1128 aa).

Residues 85–120 (PPNRDIVSGPRSQDPSVKRNGVKVPGEHRRKENGVN) are disordered. Residues 332-348 (NLPQQAVSAPSRVAAVG) are interaction with APPBP1. The interval 393-436 (MRSGAASQSKGSKAHPASPDWNPSNADLLPSQGSSVPQSAGTAL) is disordered. Residues 413-433 (WNPSNADLLPSQGSSVPQSAG) are compositionally biased toward polar residues. A phosphoserine mark is found at Ser479, Ser555, Ser568, Ser571, and Ser575. Disordered regions lie at residues 549–596 (QARM…FPPA) and 654–705 (NPQQ…LPFL). Polar residues predominate over residues 562–574 (GQDQVLSPASKQE). Positions 654-669 (NPQQHPENIYSCSQGK) are enriched in polar residues. Over residues 684–693 (HESHENERIP) the composition is skewed to basic and acidic residues. Ser697, Ser713, and Ser736 each carry phosphoserine. 3 disordered regions span residues 723-748 (KLSN…GPNI), 802-824 (SLVP…SDVP), and 870-907 (PPPP…KRTN). The SH3-binding signature appears at 866–875 (YPPYPPPPYP). A mediates interaction with APC2 region spans residues 876 to 1128 (SGEPEVSEED…RIKPRQRSLA (253 aa)). ANK repeat units follow at residues 958-987 (EGIT…NVNA) and 991-1020 (DGWT…AVFA). An SH3 domain is found at 1057–1119 (MNKGVIYALW…PRNLLGLYPR (63 aa)).

The protein belongs to the ASPP family. As to quaternary structure, interacts with P53/TP53; the interaction promotes pro-apoptotic activity. Interacts with BCL2. Interacts with protein phosphatase 1. Interacts with RELA NF-kappa-B subunit. This interaction probably prevents the activation of apoptosis, possibly by preventing its interaction with p53/TP53. Interacts with APC2 and APPBP1. Interacts with DDX42 (via the C-terminus); the interaction is not inhibited by TP53BP2 ubiquitination and is independent of p53/TP53.

Its subcellular location is the cytoplasm. The protein localises to the perinuclear region. It localises to the nucleus. Regulator that plays a central role in regulation of apoptosis and cell growth via its interactions with proteins such as TP53. Regulates p53/TP53 by enhancing the DNA binding and transactivation function of p53/TP53 on the promoters of proapoptotic genes in vivo. Inhibits the ability of APPBP1 to conjugate NEDD8 to CUL1, and thereby decreases APPBP1 ability to induce apoptosis. Impedes cell cycle progression at G2/M. Its apoptosis-stimulating activity is inhibited by its interaction with DDX42. The sequence is that of Apoptosis-stimulating of p53 protein 2 (Tp53bp2) from Mus musculus (Mouse).